The chain runs to 347 residues: tRNA N6-adenosine threonylcarbamoyltransferase (347 aa).

Residues His111 and His115 each contribute to the Fe cation site. Residues 134–138 (LVSGG), Asp167, Gly180, and Asn277 contribute to the substrate site. Residue Asp305 coordinates Fe cation.

Belongs to the KAE1 / TsaD family. It depends on Fe(2+) as a cofactor.

The protein localises to the cytoplasm. The catalysed reaction is L-threonylcarbamoyladenylate + adenosine(37) in tRNA = N(6)-L-threonylcarbamoyladenosine(37) in tRNA + AMP + H(+). Functionally, required for the formation of a threonylcarbamoyl group on adenosine at position 37 (t(6)A37) in tRNAs that read codons beginning with adenine. Is involved in the transfer of the threonylcarbamoyl moiety of threonylcarbamoyl-AMP (TC-AMP) to the N6 group of A37, together with TsaE and TsaB. TsaD likely plays a direct catalytic role in this reaction. In Ralstonia pickettii (strain 12J), this protein is tRNA N6-adenosine threonylcarbamoyltransferase.